Here is a 278-residue protein sequence, read N- to C-terminus: MYSSSSVSKRFVLVPIVVVVTTQLLLVRNVSSLNLTNSYLHHKCVVNQGKYKPGSKYEKSLDDIIQSFSNKDKDSYGFRTGYSMKAYGKEPDMVSITYQCRIDSRGPKCQSCVVTAGYELLRKRCPRYKEAIIWYDQCLVEFSSLDTSGQINYDDNFCMPSAKNLIGNSISLEERLHLLNNLTKIAVTKIDKNIEGIKKPVLYAAGEKRLGTKSLYGMVQCSADLSVQGCNECMLYYIVHFQECWESKQGVRVLSRSCNFRYELYPFISPKGSYYTKF.

The first 32 residues, 1-32 (MYSSSSVSKRFVLVPIVVVVTTQLLLVRNVSS), serve as a signal peptide directing secretion. Gnk2-homologous domains are found at residues 39–147 (YLHH…SLDT) and 160–267 (PSAK…LYPF).

Belongs to the cysteine-rich repeat secretory protein family.

Its subcellular location is the secreted. The protein is Putative cysteine-rich repeat secretory protein 19 (CRRSP19) of Arabidopsis thaliana (Mouse-ear cress).